We begin with the raw amino-acid sequence, 556 residues long: 2-succinyl-5-enolpyruvyl-6-hydroxy-3-cyclohexene-1-carboxylate synthase (556 aa).

This sequence belongs to the TPP enzyme family. MenD subfamily. In terms of assembly, homodimer. It depends on Mg(2+) as a cofactor. Mn(2+) is required as a cofactor. Thiamine diphosphate serves as cofactor.

It catalyses the reaction isochorismate + 2-oxoglutarate + H(+) = 5-enolpyruvoyl-6-hydroxy-2-succinyl-cyclohex-3-ene-1-carboxylate + CO2. It participates in quinol/quinone metabolism; 1,4-dihydroxy-2-naphthoate biosynthesis; 1,4-dihydroxy-2-naphthoate from chorismate: step 2/7. It functions in the pathway quinol/quinone metabolism; menaquinone biosynthesis. Its function is as follows. Catalyzes the thiamine diphosphate-dependent decarboxylation of 2-oxoglutarate and the subsequent addition of the resulting succinic semialdehyde-thiamine pyrophosphate anion to isochorismate to yield 2-succinyl-5-enolpyruvyl-6-hydroxy-3-cyclohexene-1-carboxylate (SEPHCHC). The protein is 2-succinyl-5-enolpyruvyl-6-hydroxy-3-cyclohexene-1-carboxylate synthase of Escherichia coli O8 (strain IAI1).